The primary structure comprises 105 residues: METLRYRFDGRNGARTGLDHALVGVVASGNLEVLVERVPLGGAMEIEIVTAARGFGEIWQAVLDDFAARHSLQDVRISINDVGATPAVVSLRLEQAIDVLQGADA.

An O-(phosphoribosyl dephospho-coenzyme A)serine modification is found at Ser-28.

The protein belongs to the MdcC family. Post-translationally, covalently binds the prosthetic group of malonate decarboxylase.

Its subcellular location is the cytoplasm. In terms of biological role, subunit of malonate decarboxylase, it is an acyl carrier protein to which acetyl and malonyl thioester residues are bound via a 2'-(5''-phosphoribosyl)-3'-dephospho-CoA prosthetic group and turn over during the catalytic mechanism. The polypeptide is Malonate decarboxylase acyl carrier protein (Xanthomonas campestris pv. campestris (strain 8004)).